Reading from the N-terminus, the 601-residue chain is Invasin CotH3 (601 aa).

Positions methionine 1–alanine 17 are cleaved as a signal peptide. 10 N-linked (GlcNAc...) asparagine glycosylation sites follow: asparagine 28, asparagine 85, asparagine 170, asparagine 324, asparagine 449, asparagine 527, asparagine 541, asparagine 554, asparagine 561, and asparagine 571. Residues serine 539–serine 579 are compositionally biased toward low complexity. The segment at serine 539 to alanine 581 is disordered. A lipid anchor (GPI-anchor amidated serine) is attached at serine 579. Residues glycine 580–phenylalanine 601 constitute a propeptide, removed in mature form.

Interacts with HSPA5/BiP on the cell surface of host nasal epithelial cells.

It localises to the cell membrane. Promotes invasion of host epithelial cells by adhering to receptors on the host cell surface to facilitate endocytosis of the pathogen into host cells. Binds HSPA5/BiP protein on the cell surface of host nasal epithelial cells. The sequence is that of Invasin CotH3 from Rhizopus delemar (strain RA 99-880 / ATCC MYA-4621 / FGSC 9543 / NRRL 43880) (Mucormycosis agent).